Here is a 188-residue protein sequence, read N- to C-terminus: Protein TIFY 9 (188 aa).

The segment at 20 to 41 (DADDRHAKSGGSSASSSSSIRG) is disordered. The span at 28 to 38 (SGGSSASSSSS) shows a compositional bias: low complexity. Residues 80–114 (AAAAAAPMTLFYNGSVAVFDVSHDKAEAIMRMATE) form the Tify domain. Positions 135–160 (PLTRTKSLQRFLSKRKERLTSLGPYQ) match the Jas motif. The segment at 156-188 (LGPYQVGGPAAVGATTSTTTKSFLAKEEEHTAS) is disordered. Residues 179-188 (LAKEEEHTAS) are compositionally biased toward basic and acidic residues.

This sequence belongs to the TIFY/JAZ family. In terms of assembly, interacts with COI1A and COI2 in a coronatine-dependent manner. Coronatine is an analog of jasmonoyl isoleucine (JA-Ile). In terms of processing, ubiquitinated. Targeted for degradation by the SCF(COI1) E3 ubiquitin ligase-proteasome pathway during jasmonate signaling.

Its function is as follows. Repressor of jasmonate responses. The sequence is that of Protein TIFY 9 from Oryza sativa subsp. japonica (Rice).